We begin with the raw amino-acid sequence, 457 residues long: Elongation factor 1-alpha (457 aa).

A N,N,N-trimethylglycine modification is found at Gly-2. Lys-3 is subject to N6,N6-dimethyllysine; alternate. Lys-3 is modified (N6-methyllysine; alternate). Residues 5–240 (KTHVNVVVIG…DAIEPPVRPS (236 aa)) enclose the tr-type G domain. Residues 14–21 (GHVDSGKS) are G1. 14–21 (GHVDSGKS) contributes to the GTP binding site. Lys-30 bears the N6-methyllysine mark. Residues 70-74 (GITID) are G2. Position 79 is an N6,N6,N6-trimethyllysine (Lys-79). A G3 region spans residues 91–94 (DAPG). GTP-binding positions include 91–95 (DAPGH) and 153–156 (NKMD). The tract at residues 153–156 (NKMD) is G4. The G5 stretch occupies residues 192-194 (SGW). Lys-316 carries the N6,N6-dimethyllysine; alternate modification. Lys-316 is subject to N6-methyllysine; alternate. Lys-389 is subject to N6-methyllysine.

This sequence belongs to the TRAFAC class translation factor GTPase superfamily. Classic translation factor GTPase family. EF-Tu/EF-1A subfamily.

The protein resides in the cytoplasm. Functionally, this protein promotes the GTP-dependent binding of aminoacyl-tRNA to the A-site of ribosomes during protein biosynthesis. In Mucor circinelloides f. lusitanicus (Mucor racemosus var. lusitanicus), this protein is Elongation factor 1-alpha (TEF-3).